Consider the following 289-residue polypeptide: ATP synthase subunit a (289 aa).

The next 6 membrane-spanning stretches (helical) occupy residues 43-63, 101-121, 160-180, 193-213, 232-252, and 259-279; these read AFHV…VLIF, SAVI…MNAV, LSVF…GGFI, LFVQ…TLIA, VFIL…GLGV, and AVFH…LTIV.

It belongs to the ATPase A chain family. In terms of assembly, F-type ATPases have 2 components, CF(1) - the catalytic core - and CF(0) - the membrane proton channel. CF(1) has five subunits: alpha(3), beta(3), gamma(1), delta(1), epsilon(1). CF(0) has three main subunits: a(1), b(2) and c(9-12). The alpha and beta chains form an alternating ring which encloses part of the gamma chain. CF(1) is attached to CF(0) by a central stalk formed by the gamma and epsilon chains, while a peripheral stalk is formed by the delta and b chains.

The protein localises to the cell inner membrane. Functionally, key component of the proton channel; it plays a direct role in the translocation of protons across the membrane. The chain is ATP synthase subunit a from Pseudomonas syringae pv. syringae (strain B728a).